The primary structure comprises 2146 residues: Conidial pigment polyketide synthase alb1 (2146 aa).

The tract at residues 8–244 is N-terminal acylcarrier protein transacylase domain (SAT); that stretch reads YLFGDQTISC…KAPGVSGPYH (237 aa). A Ketosynthase family 3 (KS3) domain is found at 375–806; the sequence is RSKIAIIGMS…GGNTALLMED (432 aa). Residues Cys547, His682, and His724 each act as for beta-ketoacyl synthase activity in the active site. The interval 911 to 1232 is malonyl-CoA:ACP transacylase (MAT) domain; that stretch reads GFVFTGQGAQ…LSTLHLAGVE (322 aa). Ser1001 functions as the For acyl/malonyl transferase activity in the catalytic mechanism. Residues 1290-1602 are product template (PT) domain; sequence TTAAQKIVEC…ARKILDTVLP (313 aa). Positions 1294–1427 are N-terminal hotdog fold; the sequence is QKIVECREDG…VKLFNCAERE (134 aa). Residues 1294 to 1598 enclose the PKS/mFAS DH domain; sequence QKIVECREDG…FQALARKILD (305 aa). His1326 (proton acceptor; for dehydratase activity) is an active-site residue. The segment at 1453 to 1598 is C-terminal hotdog fold; that stretch reads AHRMQRGMVY…FQALARKILD (146 aa). Residue Asp1511 is the Proton donor; for dehydratase activity of the active site. The disordered stretch occupies residues 1611–1644; sequence GAPAPAPARPIGEKKAPPPIKVTGPPKPNPSNAR. The segment covering 1627-1639 has biased composition (pro residues); it reads PPPIKVTGPPKPN. Positions 1647-1721 constitute a Carrier 1 domain; that stretch reads SPVVARALEI…DFKAYLAEKG (75 aa). Ser1681 carries the O-(pantetheine 4'-phosphoryl)serine modification. The disordered stretch occupies residues 1724–1769; that stretch reads DSSSPEPSSEPESKFSFNSDASSEASSGLTTPGITSPVKHEAPKGG. Residues 1738–1750 show a composition bias toward low complexity; that stretch reads FSFNSDASSEASS. A Carrier 2 domain is found at 1768–1845; it reads GGQNKVWKSI…AVQAALDLKP (78 aa). At Ser1805 the chain carries O-(pantetheine 4'-phosphoryl)serine. A claisen cyclase domain region spans residues 1892 to 2019; the sequence is KLFMFPDGSG…SIGLFGDGKR (128 aa). Ser1962 acts as the For Claisen cyclase activity in catalysis.

It localises to the endosome. It catalyses the reaction 6 malonyl-CoA + acetyl-CoA + 6 H(+) = naphtopyrone YWA1 + 6 CO2 + 7 CoA + H2O. Its pathway is pigment biosynthesis; melanin biosynthesis. Its function is as follows. Non-reducing polyketide synthase; part of the gene cluster that mediates the biosynthesis of dihydroxynaphthalene (DHN)-melanin, a bluish-green pigment and a structural component of the conidial wall. The first step of the pathway is the production of the heptaketide naphtopyrone YWA1 by the polyketide synthase alb1 though condensation of acetyl-CoA with malonyl-CoA. The naphtopyrone YWA1 is then converted to the pentaketide 1,3,6,8-tetrahydroxynaphthalene (1,3,6,8-THN) by the heptaketide hydrolyase ayg1 though chain-length shortening. 1,3,6,8-THN is substrate of the hydroxynaphthalene reductase arp2 to yield scytalone. The scytalone dehydratase arp1 then reduces scytalone to 1,3,8-THN. 1,3,8-THN is also substrate of the hydroxynaphthalene reductase arp2 to yield vermelone. Vermelone is further converted by the multicopper oxidase abr1 to 1,8-DHN. Finally the laccase abr2 transforms 1,8-DHN to DHN-melanin. DHN-melanin biosynthesis appears to be initiated in endosomes where early enzymes (abl1, ayg1, arp1 and arp2) localize, with exocytosis leading to melanin deposition on the cell surface where late enzymes (abr1 and abr2) localize. DHN-melanin is an important structural component of the outer cell wall and is required for the presence of conidial surface hydrophobins. DHN-melanin also plays a crucial role in fungal virulence, including a protective role against the host's immune defenses. DHN-melanin protects also conidia against amoeba predation. The chain is Conidial pigment polyketide synthase alb1 from Aspergillus fumigatus (strain ATCC MYA-4609 / CBS 101355 / FGSC A1100 / Af293) (Neosartorya fumigata).